The sequence spans 120 residues: Protein p14.5 (120 aa).

Disordered regions lie at residues 1 to 27 (MADF…LEYD) and 80 to 120 (REFT…HKSK). Ala-2 bears the N-acetylalanine; by host mark. Residues 103 to 120 (KPKKKKHLFPKLSSHKSK) are compositionally biased toward basic residues.

This sequence belongs to the asfivirus structural protein p14.5 family. In terms of assembly, interacts with the major capsid protein. Interacts with host IRF3; this interaction interferes with the recruitment of IRF3 to TBK1. Post-translationally, acetylated.

It is found in the virion. In terms of biological role, structural protein required for transport of intracellular particles from the assembly sites to the plasma membrane. Binds to both ssDNA and dsDNA. Suppressed the activation of the cGAS/STING pathway by interfering with the recruitment of IRF3 to TBK1, which in turn suppresses IRF3 phosphorylation, decreasing interferon production. The polypeptide is Protein p14.5 (Ornithodoros (relapsing fever ticks)).